The primary structure comprises 309 residues: Carbamate kinase 3 (309 aa).

The protein belongs to the carbamate kinase family.

It localises to the cytoplasm. The enzyme catalyses hydrogencarbonate + NH4(+) + ATP = carbamoyl phosphate + ADP + H2O + H(+). It functions in the pathway metabolic intermediate metabolism; carbamoyl phosphate degradation; CO(2) and NH(3) from carbamoyl phosphate: step 1/1. The polypeptide is Carbamate kinase 3 (arcC3) (Staphylococcus aureus (strain USA300)).